The sequence spans 309 residues: Acetyl-coenzyme A carboxylase carboxyl transferase subunit beta (309 aa).

Positions 29-298 constitute a CoA carboxyltransferase N-terminal domain; the sequence is NSDWTSCCKG…AINSSENETS (270 aa). C35, C36, C52, and C55 together coordinate Zn(2+).

Belongs to the AccD/PCCB family. Acetyl-CoA carboxylase is a heterohexamer composed of biotin carboxyl carrier protein (AccB), biotin carboxylase (AccC) and two subunits each of ACCase subunit alpha (AccA) and ACCase subunit beta (AccD). It depends on Zn(2+) as a cofactor.

It is found in the cytoplasm. It carries out the reaction N(6)-carboxybiotinyl-L-lysyl-[protein] + acetyl-CoA = N(6)-biotinyl-L-lysyl-[protein] + malonyl-CoA. It participates in lipid metabolism; malonyl-CoA biosynthesis; malonyl-CoA from acetyl-CoA: step 1/1. Functionally, component of the acetyl coenzyme A carboxylase (ACC) complex. Biotin carboxylase (BC) catalyzes the carboxylation of biotin on its carrier protein (BCCP) and then the CO(2) group is transferred by the transcarboxylase to acetyl-CoA to form malonyl-CoA. This is Acetyl-coenzyme A carboxylase carboxyl transferase subunit beta from Pelagibacter ubique (strain HTCC1062).